Reading from the N-terminus, the 196-residue chain is Ribonuclease HII (196 aa).

The RNase H type-2 domain maps to 9 to 196 (SLIAGVDEVG…APVKRAIGLK (188 aa)). 3 residues coordinate a divalent metal cation: aspartate 15, glutamate 16, and aspartate 107.

This sequence belongs to the RNase HII family. Requires Mn(2+) as cofactor. Mg(2+) is required as a cofactor.

Its subcellular location is the cytoplasm. The enzyme catalyses Endonucleolytic cleavage to 5'-phosphomonoester.. Functionally, endonuclease that specifically degrades the RNA of RNA-DNA hybrids. The polypeptide is Ribonuclease HII (Photorhabdus laumondii subsp. laumondii (strain DSM 15139 / CIP 105565 / TT01) (Photorhabdus luminescens subsp. laumondii)).